A 428-amino-acid polypeptide reads, in one-letter code: C4-dicarboxylate transport protein (428 aa).

The next 9 membrane-spanning stretches (helical) occupy residues 8-28, 44-64, 76-96, 142-162, 184-204, 222-242, 289-309, 326-346, and 352-372; these read SLYV…HFYP, LIKM…IAGM, VALL…LIIV, IGAF…LFGF, VIFG…FGAM, LIIC…GSIA, VVGL…SIYL, IFHQ…AAGV, and IVLA…LALI.

This sequence belongs to the dicarboxylate/amino acid:cation symporter (DAACS) (TC 2.A.23) family.

The protein localises to the cell inner membrane. Responsible for the transport of dicarboxylates such as succinate, fumarate, and malate from the periplasm across the membrane. The protein is C4-dicarboxylate transport protein of Klebsiella pneumoniae (strain 342).